A 231-amino-acid polypeptide reads, in one-letter code: 7-cyano-7-deazaguanine synthase (231 aa).

Residue Phe8–Leu18 coordinates ATP. Cys188, Cys197, Cys200, and Cys203 together coordinate Zn(2+).

It belongs to the QueC family. It depends on Zn(2+) as a cofactor.

The enzyme catalyses 7-carboxy-7-deazaguanine + NH4(+) + ATP = 7-cyano-7-deazaguanine + ADP + phosphate + H2O + H(+). It participates in purine metabolism; 7-cyano-7-deazaguanine biosynthesis. Functionally, catalyzes the ATP-dependent conversion of 7-carboxy-7-deazaguanine (CDG) to 7-cyano-7-deazaguanine (preQ(0)). The chain is 7-cyano-7-deazaguanine synthase from Erwinia tasmaniensis (strain DSM 17950 / CFBP 7177 / CIP 109463 / NCPPB 4357 / Et1/99).